Consider the following 75-residue polypeptide: RNA-binding protein KhpA (75 aa).

One can recognise a KH domain in the interval 29–75; sequence SIIIELKVAPEDMGKVIGKQGRIAQAIRTLVKAAALKEKKRVIVEII.

The protein belongs to the KhpA RNA-binding protein family. In terms of assembly, forms a complex with KhpB.

The protein resides in the cytoplasm. In terms of biological role, a probable RNA chaperone. Forms a complex with KhpB which binds to cellular RNA and controls its expression. Plays a role in peptidoglycan (PG) homeostasis and cell length regulation. The sequence is that of RNA-binding protein KhpA from Caldanaerobacter subterraneus subsp. tengcongensis (strain DSM 15242 / JCM 11007 / NBRC 100824 / MB4) (Thermoanaerobacter tengcongensis).